A 53-amino-acid polypeptide reads, in one-letter code: Large ribosomal subunit protein bL33B (53 aa).

It belongs to the bacterial ribosomal protein bL33 family.

The polypeptide is Large ribosomal subunit protein bL33B (Sorangium cellulosum (strain So ce56) (Polyangium cellulosum (strain So ce56))).